A 476-amino-acid polypeptide reads, in one-letter code: Glycogen synthase (476 aa).

Residue K15 coordinates ADP-alpha-D-glucose.

The protein belongs to the glycosyltransferase 1 family. Bacterial/plant glycogen synthase subfamily.

It carries out the reaction [(1-&gt;4)-alpha-D-glucosyl](n) + ADP-alpha-D-glucose = [(1-&gt;4)-alpha-D-glucosyl](n+1) + ADP + H(+). Its pathway is glycan biosynthesis; glycogen biosynthesis. Synthesizes alpha-1,4-glucan chains using ADP-glucose. The protein is Glycogen synthase of Bacillus anthracis.